We begin with the raw amino-acid sequence, 364 residues long: Aminomethyltransferase (364 aa).

This sequence belongs to the GcvT family. In terms of assembly, the glycine cleavage system is composed of four proteins: P, T, L and H.

The catalysed reaction is N(6)-[(R)-S(8)-aminomethyldihydrolipoyl]-L-lysyl-[protein] + (6S)-5,6,7,8-tetrahydrofolate = N(6)-[(R)-dihydrolipoyl]-L-lysyl-[protein] + (6R)-5,10-methylene-5,6,7,8-tetrahydrofolate + NH4(+). In terms of biological role, the glycine cleavage system catalyzes the degradation of glycine. The polypeptide is Aminomethyltransferase (Shewanella pealeana (strain ATCC 700345 / ANG-SQ1)).